Consider the following 367-residue polypeptide: THO complex subunit 6 (367 aa).

WD repeat units follow at residues 23–67 (IETR…SQSA), 88–129 (AHEG…ESDV), 157–196 (SPMP…IKMT), 199–240 (GHSD…KVIG), 243–283 (DKKS…CVQT), 285–322 (PIPA…LSQI), and 324–363 (CAPC…CTFR).

It belongs to the WD repeat THOC6 family. As to quaternary structure, component of the THO complex, which is composed of THO1, THO2, THO3, THO5, THO6 and THO7. Interacts with ABI5, DDB1A and DWA2.

Its subcellular location is the nucleus. It functions in the pathway protein modification; protein ubiquitination. Functionally, acts as a component of the THO subcomplex of the TREX complex which is thought to couple mRNA transcription, processing and nuclear export. Component of the CUL4-RBX1-DDB1-DWA1/DWA2 E3 ubiquitin-protein ligase complex that acts as a negative regulator in abscisic acid (ABA) signaling. May function as the substrate recognition module within this complex leading to ABI5 degradation. Functionally redundant with DWA2. The chain is THO complex subunit 6 (THO6) from Arabidopsis thaliana (Mouse-ear cress).